The sequence spans 374 residues: All-trans-retinol dehydrogenase [NAD(+)] ADH7 (374 aa).

M1 bears the N-acetylmethionine mark. 7 residues coordinate Zn(2+): C47, H68, C98, C101, C104, C112, and C174. NAD(+) contacts are provided by residues 199 to 204 (GLGGVG), D223, K228, 292 to 294 (VGA), and R369.

Belongs to the zinc-containing alcohol dehydrogenase family. Class-IV subfamily. As to quaternary structure, homodimer. The cofactor is Zn(2+). In terms of tissue distribution, preferentially expressed in stomach.

The protein localises to the cytoplasm. It catalyses the reaction a primary alcohol + NAD(+) = an aldehyde + NADH + H(+). The catalysed reaction is 10-hydroxydecanoate + NAD(+) = 10-oxodecanoate + NADH + H(+). It carries out the reaction all-trans-retinol + NAD(+) = all-trans-retinal + NADH + H(+). The enzyme catalyses 9-cis-retinol + NAD(+) = 9-cis-retinal + NADH + H(+). It catalyses the reaction all-trans-3,4-didehydroretinol + NAD(+) = all-trans-3,4-didehydroretinal + NADH + H(+). The catalysed reaction is all-trans-4-hydroxyretinol + NAD(+) = all-trans-4-hydroxyretinal + NADH + H(+). It carries out the reaction all-trans-4-oxoretinol + NAD(+) = all-trans-4-oxoretinal + NADH + H(+). The enzyme catalyses 12-hydroxydodecanoate + NAD(+) = 12-oxododecanoate + NADH + H(+). It catalyses the reaction 16-hydroxyhexadecanoate + NAD(+) = 16-oxohexadecanoate + NADH + H(+). The catalysed reaction is hexan-1-ol + NAD(+) = hexanal + NADH + H(+). It carries out the reaction (E)-hex-2-en-1-ol + NAD(+) = (E)-hex-2-enal + NADH + H(+). The enzyme catalyses (E)-4-hydroxynon-2-en-1-ol + NAD(+) = (E)-4-hydroxynon-2-enal + NADH + H(+). With respect to regulation, retinol oxidation is inhibited by the detergent Tween 80. Ethanol inhibits both all-trans-retinol and 9-cis-retinol oxidation. 13-cis-retinol is an effective competitive inhibitor of the 9-cis-retinol oxidation. All-trans-retinoic acid is a powerful inhibitor of all-trans-retinol oxidation. 13-cis-retinoic acid is a powerful inhibitor of all-trans-retinol oxidation. Cimetidine and ranitidine inhibited ethanol oxidation. In terms of biological role, catalyzes the NAD-dependent oxidation of all-trans-retinol, alcohol, aldehyde and omega-hydroxy fatty acids and their derivatives. Oxidizes preferentially all trans-retinol, all-trans-4-hydroxyretinol, 9-cis-retinol, 2-hexenol, and long chain omega-hydroxy fatty acids such as juniperic acid. In vitro can also catalyze the NADH-dependent reduction of all-trans-retinal and aldehydes and their derivatives. Reduces preferentially all trans-retinal, all-trans-4-oxoretinal and hexanal. Catalyzes in the oxidative direction with higher efficiency. Therefore may participate in retinoid metabolism, fatty acid omega-oxidation, and elimination of cytotoxic aldehydes produced by lipid peroxidation. In Rattus norvegicus (Rat), this protein is All-trans-retinol dehydrogenase [NAD(+)] ADH7 (Adh7).